We begin with the raw amino-acid sequence, 495 residues long: Major facilitator-type transporter hxnP (495 aa).

The segment at 1 to 24 (MGATATDIEKVPSAGTPDEPKAGE) is disordered. Helical transmembrane passes span 36–55 (SFVRKVDFFVLPMLCLMYFF), 84–104 (LLILLFYIPFGLFDLPWNLLI), 123–143 (VWGICALCQCAANNFGGLLAI), 145–165 (IILGVFEAGFFAGSTFYFTLF), and 177–197 (VLQSFAVLASAFSGLISFGLF). Residue N200 is glycosylated (N-linked (GlcNAc...) asparagine). Transmembrane regions (helical) follow at residues 209-229 (WLFIVEGAMTLIIGVIGFWWL), 282-302 (VITFSYPVAYATAMNFFPIIV), 314-334 (LWTVAPNLVGAVVLLVVAKSS), 341-361 (SLHIIFSLTVSLVGMLILASI), and 368-388 (GVSYFACFLLASGAYIPTCLV). The N-linked (GlcNAc...) asparagine glycan is linked to N395. 2 consecutive transmembrane segments (helical) span residues 404–424 (ANTGFFVGLGNIAGVLSAATF) and 436–456 (LVATCACNGVCILATAFMGTW).

This sequence belongs to the major facilitator superfamily.

The protein resides in the cell membrane. Major facilitator-type transporter, part of the hnx cluster involved in the purine degradation. The nicotinate hydroxylase hnxS accepts nicotinate as a substrate and catalyzes the first step of nicotinate catabolism. The major facilitator-type transporters hxnP and hxnZ are probably involved in the uptake of nicotinate-derived metabolites, and the oxidoreductases hxnT and hxnY in the further metabolism of 6-OH nicotinic acid. This chain is Major facilitator-type transporter hxnP, found in Emericella nidulans (strain FGSC A4 / ATCC 38163 / CBS 112.46 / NRRL 194 / M139) (Aspergillus nidulans).